The chain runs to 177 residues: Gamma-crystallin M1-2 (177 aa).

2 consecutive Beta/gamma crystallin 'Greek key' domains span residues 2 to 40 and 41 to 83; these read GKII…RVEN and GCWM…RLLS. A connecting peptide region spans residues 84 to 90; sequence QNLGIGT. 2 consecutive Beta/gamma crystallin 'Greek key' domains span residues 91–131 and 132–174; these read NKLR…NVLD and GYWI…RRVI.

This sequence belongs to the beta/gamma-crystallin family. Monomer.

In terms of biological role, crystallins are the dominant structural components of the vertebrate eye lens. This is Gamma-crystallin M1-2 from Aquarana catesbeiana (American bullfrog).